The primary structure comprises 140 residues: Ergosterol biosynthetic protein 28 homolog (140 aa).

The next 4 helical transmembrane spans lie at 4–24 (FLNVLRSWLVMVSIIAMGNTL), 52–72 (TFGIWTLLSSVIRCLCAIDIH), 79–99 (ITLWTFLLALGHFLSELFVFG), and 105–125 (VGVLAPLMVASFSILGMLVGL).

Belongs to the ERG28 family.

It localises to the endoplasmic reticulum membrane. The chain is Ergosterol biosynthetic protein 28 homolog from Mus musculus (Mouse).